A 204-amino-acid polypeptide reads, in one-letter code: Lipid A acyltransferase PagP (204 aa).

The first 25 residues, 1–25 (MSYKHLISACIFSSLCLGQVNAVLA), serve as a signal peptide directing secretion. Active-site residues include His-76, Asp-119, and Ser-120.

Belongs to the lipid A palmitoyltransferase family. Homodimer.

It localises to the cell outer membrane. It carries out the reaction a lipid A + a 1,2-diacyl-sn-glycero-3-phosphocholine = a hepta-acyl lipid A + a 2-acyl-sn-glycero-3-phosphocholine. The catalysed reaction is a lipid IVA + a 1,2-diacyl-sn-glycero-3-phosphocholine = a lipid IVB + a 2-acyl-sn-glycero-3-phosphocholine. The enzyme catalyses a lipid IIA + a 1,2-diacyl-sn-glycero-3-phosphocholine = a lipid IIB + a 2-acyl-sn-glycero-3-phosphocholine. Transfers a fatty acid residue from the sn-1 position of a phospholipid to the N-linked hydroxyfatty acid chain on the proximal unit of lipid A or its precursors. The chain is Lipid A acyltransferase PagP from Yersinia enterocolitica serotype O:8 / biotype 1B (strain NCTC 13174 / 8081).